Here is a 704-residue protein sequence, read N- to C-terminus: Neutral ceramidase (704 aa).

The N-terminal stretch at 1–23 (MAISKIAFLALIALSGLCGLASA) is a signal peptide. N230 carries an N-linked (GlcNAc...) asparagine glycan. The active-site Nucleophile is the S276. N362, N550, and N598 each carry an N-linked (GlcNAc...) asparagine glycan.

Belongs to the neutral ceramidase family. In terms of processing, N-glycosylated.

The protein localises to the secreted. The catalysed reaction is an N-acylsphing-4-enine + H2O = sphing-4-enine + a fatty acid. Functionally, hydrolyzes the sphingolipid ceramide into sphingosine and free fatty acid at an optimal pH of 6.5-7.5. Acts as a key regulator of sphingolipid signaling metabolites by generating sphingosine at the cell surface. The protein is Neutral ceramidase (CDase) of Drosophila pseudoobscura pseudoobscura (Fruit fly).